We begin with the raw amino-acid sequence, 481 residues long: Aspartyl/glutamyl-tRNA(Asn/Gln) amidotransferase subunit B (481 aa).

Belongs to the GatB/GatE family. GatB subfamily. As to quaternary structure, heterotrimer of A, B and C subunits.

The enzyme catalyses L-glutamyl-tRNA(Gln) + L-glutamine + ATP + H2O = L-glutaminyl-tRNA(Gln) + L-glutamate + ADP + phosphate + H(+). It carries out the reaction L-aspartyl-tRNA(Asn) + L-glutamine + ATP + H2O = L-asparaginyl-tRNA(Asn) + L-glutamate + ADP + phosphate + 2 H(+). Allows the formation of correctly charged Asn-tRNA(Asn) or Gln-tRNA(Gln) through the transamidation of misacylated Asp-tRNA(Asn) or Glu-tRNA(Gln) in organisms which lack either or both of asparaginyl-tRNA or glutaminyl-tRNA synthetases. The reaction takes place in the presence of glutamine and ATP through an activated phospho-Asp-tRNA(Asn) or phospho-Glu-tRNA(Gln). This chain is Aspartyl/glutamyl-tRNA(Asn/Gln) amidotransferase subunit B, found in Pseudomonas fluorescens (strain ATCC BAA-477 / NRRL B-23932 / Pf-5).